Here is a 354-residue protein sequence, read N- to C-terminus: S-adenosylmethionine:tRNA ribosyltransferase-isomerase (354 aa).

This sequence belongs to the QueA family. In terms of assembly, monomer.

The protein resides in the cytoplasm. The catalysed reaction is 7-aminomethyl-7-carbaguanosine(34) in tRNA + S-adenosyl-L-methionine = epoxyqueuosine(34) in tRNA + adenine + L-methionine + 2 H(+). Its pathway is tRNA modification; tRNA-queuosine biosynthesis. Transfers and isomerizes the ribose moiety from AdoMet to the 7-aminomethyl group of 7-deazaguanine (preQ1-tRNA) to give epoxyqueuosine (oQ-tRNA). In Salmonella schwarzengrund (strain CVM19633), this protein is S-adenosylmethionine:tRNA ribosyltransferase-isomerase.